A 95-amino-acid chain; its full sequence is Small ribosomal subunit protein uS19 (95 aa).

Positions 76-95 (PTRRFGGHADKKAKKGELKK) are disordered. Basic and acidic residues predominate over residues 82 to 95 (GHADKKAKKGELKK).

This sequence belongs to the universal ribosomal protein uS19 family.

Functionally, protein S19 forms a complex with S13 that binds strongly to the 16S ribosomal RNA. The polypeptide is Small ribosomal subunit protein uS19 (Thermotoga neapolitana (strain ATCC 49049 / DSM 4359 / NBRC 107923 / NS-E)).